The chain runs to 229 residues: Large ribosomal subunit protein uL1 (229 aa).

It belongs to the universal ribosomal protein uL1 family. In terms of assembly, part of the 50S ribosomal subunit.

In terms of biological role, binds directly to 23S rRNA. The L1 stalk is quite mobile in the ribosome, and is involved in E site tRNA release. Protein L1 is also a translational repressor protein, it controls the translation of the L11 operon by binding to its mRNA. In Desulforamulus reducens (strain ATCC BAA-1160 / DSM 100696 / MI-1) (Desulfotomaculum reducens), this protein is Large ribosomal subunit protein uL1.